We begin with the raw amino-acid sequence, 135 residues long: U-scoloptoxin(22)-Er1a (135 aa).

The first 24 residues, 1–24 (MAVILKHLAIILLVFVIEIKMGQG), serve as a signal peptide directing secretion. The segment at 61 to 135 (PQITFSTDWG…RSPRYLPTII (75 aa)) is disordered. The segment covering 75–127 (SVNEDREAAERERSPQMKRSEHEEQLMAKDEMKRFQEERNPSSDDKIAIDKRS) has biased composition (basic and acidic residues).

The protein belongs to the scoloptoxin-22 family. Expressed by the venom gland.

It localises to the secreted. The polypeptide is U-scoloptoxin(22)-Er1a (Ethmostigmus rubripes (Giant centipede)).